Reading from the N-terminus, the 402-residue chain is F-box protein At4g22390 (402 aa).

Residues 1–49 (MAECPTDLINEMFLRLRATTLVKCRVLSKPCFSLIDSPEFVSSHLRRRL) enclose the F-box domain.

The chain is F-box protein At4g22390 from Arabidopsis thaliana (Mouse-ear cress).